A 101-amino-acid chain; its full sequence is Small ribosomal subunit protein uS10 (101 aa).

This sequence belongs to the universal ribosomal protein uS10 family. In terms of assembly, part of the 30S ribosomal subunit.

Its function is as follows. Involved in the binding of tRNA to the ribosomes. The polypeptide is Small ribosomal subunit protein uS10 (Corynebacterium urealyticum (strain ATCC 43042 / DSM 7109)).